The chain runs to 968 residues: Phosphoenolpyruvate carboxylase 3 (968 aa).

Serine 11 bears the Phosphoserine mark. Catalysis depends on residues histidine 173 and lysine 603. Serine 705 is modified (phosphoserine).

The protein belongs to the PEPCase type 1 family. As to quaternary structure, homotetramer. Requires Mg(2+) as cofactor. As to expression, expressed in roots and siliques, and to a lower extent in stems, leaves and flowers.

It localises to the cytoplasm. The enzyme catalyses oxaloacetate + phosphate = phosphoenolpyruvate + hydrogencarbonate. By light-reversible phosphorylation. Through the carboxylation of phosphoenolpyruvate (PEP) it forms oxaloacetate, a four-carbon dicarboxylic acid source for the tricarboxylic acid cycle. The polypeptide is Phosphoenolpyruvate carboxylase 3 (PPC3) (Arabidopsis thaliana (Mouse-ear cress)).